The sequence spans 173 residues: C-phycocyanin-3 beta subunit (173 aa).

Asparagine 73 is modified (N4-methylasparagine). Positions 83 and 154 each coordinate (2R,3E)-phycocyanobilin.

It belongs to the phycobiliprotein family. Heterodimer of an alpha and a beta subunit, which further assembles into trimers and the trimers into hexamers. In terms of processing, contains two covalently linked bilin chromophores.

The protein resides in the cellular thylakoid membrane. In terms of biological role, light-harvesting photosynthetic bile pigment-protein from the phycobiliprotein complex (phycobilisome, PBS). Phycocyanin is the major phycobiliprotein in the PBS rod. In Microchaete diplosiphon (Fremyella diplosiphon), this protein is C-phycocyanin-3 beta subunit (cpcB3).